A 581-amino-acid chain; its full sequence is Activating signal cointegrator 1 (581 aa).

At Ala-2 the chain carries N-acetylalanine. The tract at residues 97 to 118 is disordered; the sequence is KSGDHLKRGRKKGRNRQEVPAF. Residues 171 to 187 form a C4-type zinc finger; that stretch reads CDCLGQKHKLINNCLIC. The segment at 200-300 is mediates interaction with DDRGK1; sequence CLFCGTLVCT…ASDSNQWLSK (101 aa). Ser-276 is subject to Phosphoserine. Tyr-289 carries the post-translational modification Phosphotyrosine. A mediates interaction with UFL1 region spans residues 300 to 400; the sequence is KLERETLQKR…WVDHTGAASQ (101 aa). Glycyl lysine isopeptide (Lys-Gly) (interchain with G-Cter in UFM1) cross-links involve residues Lys-324, Lys-325, and Lys-334. Ser-341 is modified (phosphoserine). A Glycyl lysine isopeptide (Lys-Gly) (interchain with G-Cter in UFM1) cross-link involves residue Lys-367. The ASCH domain occupies 437-531; it reads LSVHQPWASL…FKEQFPDISQ (95 aa).

Interacts with the thyroid hormone receptor/TR (via the ligand-binding domain); this interaction requires the presence of thyroid hormone. Interacts with the androgen receptor/AR; in an androgen, testosterone and dihydrotestosterone-dependent manner. Interacts with ESR1 (estrogen ligand-bound); competes with UFSP2. Interacts with UFSP2; competes with ligand-bound ESR1. Interacts with DDRGK1 and UFL1; the interaction with DDRGK1 is direct. Interacts with NCOA1. Interacts with EP300. Part of the ASC-1 complex, that contains TRIP4, ASCC1, ASCC2 and ASCC3. Identified in the RQT (ribosome quality control trigger) complex, that contains ASCC2, ASCC3 and TRIP4. Interacts with NEK6. Interacts with CSRP1. Interacts with ZCCHC4. In terms of processing, phosphorylated by NEK6. Polyufmylated by the UFM1-conjugating system composed of the enzymes UBA5, UFC1 and UFL1. Deufmylated by the protease UFSP2. Ufmylation of TRIP4 is promoted by ligand-bound nuclear receptors that compete with UFSP2 for interaction with TRIP4. Nuclear receptors-induced ufmylation promotes the recruitment of additional transcriptional coactivators like EP300 and NCOA1 and therefore the assembly of a coactivator complex facilitating nuclear receptor-mediated transcription.

It is found in the nucleus. It localises to the cytoplasm. Its subcellular location is the cytosol. The protein localises to the cytoskeleton. The protein resides in the microtubule organizing center. It is found in the centrosome. In terms of biological role, transcription coactivator which associates with nuclear receptors, transcriptional coactivators including EP300, CREBBP and NCOA1, and basal transcription factors like TBP and TFIIA to facilitate nuclear receptors-mediated transcription. May thereby play an important role in establishing distinct coactivator complexes under different cellular conditions. Plays a role in thyroid hormone receptor and estrogen receptor transactivation. Also involved in androgen receptor transactivation. Plays a pivotal role in the transactivation of NF-kappa-B, SRF and AP1. Acts as a mediator of transrepression between nuclear receptor and either AP1 or NF-kappa-B. May play a role in the development of neuromuscular junction. May play a role in late myogenic differentiation. Also functions as part of the RQC trigger (RQT) complex that activates the ribosome quality control (RQC) pathway, a pathway that degrades nascent peptide chains during problematic translation. This Homo sapiens (Human) protein is Activating signal cointegrator 1.